A 1268-amino-acid polypeptide reads, in one-letter code: Neurocan core protein (1268 aa).

An N-terminal signal peptide occupies residues 1–22; sequence MGAGSVWASGLLLLWLLLLVAG. Residues 37–157 enclose the Ig-like V-type domain; the sequence is RMLKSGSGPV…EQDLVTLEVT (121 aa). 5 cysteine pairs are disulfide-bonded: Cys-58–Cys-139, Cys-181–Cys-252, Cys-205–Cys-226, Cys-279–Cys-354, and Cys-303–Cys-324. The N-linked (GlcNAc...) asparagine glycan is linked to Asn-121. Link domains are found at residues 159 to 254 and 258 to 356; these read VVFH…YCFA and GGEV…YCFR. N-linked (GlcNAc...) asparagine glycosylation is present at Asn-339. Disordered regions lie at residues 363-391, 406-442, 472-540, and 574-630; these read QHGD…ELKP, PLMS…SWPS, PLGT…DQSH, and ISPS…LQAS. O-linked (Xyl...) (chondroitin sulfate) serine glycosylation is found at Ser-380 and Ser-410. Over residues 419 to 430 the composition is skewed to polar residues; it reads TWTQAPEETLGS. Residues 575–585 show a composition bias toward low complexity; it reads SPSVPSTESTP. The span at 608 to 617 shows a compositional bias: pro residues; it reads PSEPPAPSPG. The span at 618-630 shows a compositional bias: low complexity; sequence PSEALSAVSLQAS. N-linked (GlcNAc...) asparagine glycosylation occurs at Asn-742. The region spanning 960–996 is the EGF-like 1 domain; it reads PTDPCENNPCLHGGTCHTNGTVYGCSCDQGYAGENCE. 11 disulfides stabilise this stretch: Cys-964-Cys-975, Cys-969-Cys-984, Cys-986-Cys-995, Cys-1002-Cys-1013, Cys-1007-Cys-1022, Cys-1024-Cys-1033, Cys-1040-Cys-1051, Cys-1068-Cys-1160, Cys-1136-Cys-1152, Cys-1167-Cys-1210, and Cys-1196-Cys-1223. N-linked (GlcNAc...) asparagine glycosylation is present at Asn-978. One can recognise an EGF-like 2; calcium-binding domain in the interval 998–1034; sequence DIDDCLCSPCENGGTCIDEVNGFICLCLPSYGGSLCE. The C-type lectin domain maps to 1036-1165; that stretch reads DTEGCDRGWH…LPYVCKKGTV (130 aa). A Sushi domain is found at 1165-1225; that stretch reads VLCGPPPAVE…WDRPQIMCIK (61 aa). Residue Asn-1175 is glycosylated (N-linked (GlcNAc...) asparagine). Over residues 1228-1255 the composition is skewed to basic residues; the sequence is RSHRMRRHHHHPHRHHKPRKEHRKHKRH. The disordered stretch occupies residues 1228 to 1268; sequence RSHRMRRHHHHPHRHHKPRKEHRKHKRHPAEDWEKDEGDFC.

It belongs to the aggrecan/versican proteoglycan family. In terms of processing, O-glycosylated; contains chondroitin sulfate. As to expression, brain.

The protein resides in the secreted. In terms of biological role, may modulate neuronal adhesion and neurite growth during development by binding to neural cell adhesion molecules (NG-CAM and N-CAM). Chondroitin sulfate proteoglycan; binds to hyaluronic acid. This Mus musculus (Mouse) protein is Neurocan core protein (Ncan).